Here is a 411-residue protein sequence, read N- to C-terminus: Glucose-1-phosphate adenylyltransferase (411 aa).

Residues Gly-164, 179–180 (EK), and Ser-197 contribute to the alpha-D-glucose 1-phosphate site.

The protein belongs to the bacterial/plant glucose-1-phosphate adenylyltransferase family. As to quaternary structure, homotetramer.

It catalyses the reaction alpha-D-glucose 1-phosphate + ATP + H(+) = ADP-alpha-D-glucose + diphosphate. Its pathway is glycan biosynthesis; glycogen biosynthesis. Functionally, involved in the biosynthesis of ADP-glucose, a building block required for the elongation reactions to produce glycogen. Catalyzes the reaction between ATP and alpha-D-glucose 1-phosphate (G1P) to produce pyrophosphate and ADP-Glc. This Corynebacterium kroppenstedtii (strain DSM 44385 / JCM 11950 / CIP 105744 / CCUG 35717) protein is Glucose-1-phosphate adenylyltransferase.